We begin with the raw amino-acid sequence, 363 residues long: 3-isopropylmalate dehydrogenase (363 aa).

78-91 provides a ligand contact to NAD(+); sequence GPKWEHLPPAEQPE. Residues Arg99, Arg109, Arg138, and Asp227 each contribute to the substrate site. Mg(2+) is bound by residues Asp227, Asp251, and Asp255. 285-297 provides a ligand contact to NAD(+); it reads GSAPDIAGKDIAN.

This sequence belongs to the isocitrate and isopropylmalate dehydrogenases family. LeuB type 1 subfamily. Homodimer. It depends on Mg(2+) as a cofactor. The cofactor is Mn(2+).

The protein localises to the cytoplasm. It catalyses the reaction (2R,3S)-3-isopropylmalate + NAD(+) = 4-methyl-2-oxopentanoate + CO2 + NADH. The protein operates within amino-acid biosynthesis; L-leucine biosynthesis; L-leucine from 3-methyl-2-oxobutanoate: step 3/4. Functionally, catalyzes the oxidation of 3-carboxy-2-hydroxy-4-methylpentanoate (3-isopropylmalate) to 3-carboxy-4-methyl-2-oxopentanoate. The product decarboxylates to 4-methyl-2 oxopentanoate. In Pectobacterium atrosepticum (strain SCRI 1043 / ATCC BAA-672) (Erwinia carotovora subsp. atroseptica), this protein is 3-isopropylmalate dehydrogenase.